The chain runs to 1604 residues: MLLHLCSVKNLYQNRFLGLAAMASPSRNSQSRRRCKEPLRYSYNPDQFHNIDIRNGAHDAITIPRSTSDTDLVTSDSRSTLMVSSSYYSIGHSQDLVIHWDIKEEVDAGDWIGMYLIGEVSSENFLDYKNRGVNGSHRGQIIWKIDASSYFVESETKICFKYYHGVSGALRATTPSVTVKNSAAPIFKGIGSEETAQSQGSRRLISFSLSDFQAMGLKKGMFFNPDPYLKISIQPGKHSIFPALPHHGQERRSTIIGNTVNPIWQAEHFSFVSLPTDVLEIEVKDKFAKSRPIIKRFLGKLSMPVQRLLERHAIGDRVVSYTLGRRLPTDHVSGQLQFRFEITSSIHADDEEISLSAEPESSAETQDSIMNSMVGNSNGEPSGDATEFCKDAKPESPSEGNGVNSSENQNQEHAGPVEEAAGAMEARDGSNVSEAPEEPGELQDPEQHDTQPTLSAEEVAEGLPLDEDSPSSLLPEENTALGSKVEEETVPENGAREEEMQKGKDEEEEEEDVSTLEQGEPGLELRVSVRKKSRPCSLPVSELETVIASACGDAETPRTHYIRIHTLLHSMPSAQRGSTTEEEDGLEEESTLKESSEKDGLSEVDTIAADPQSMEDGESDGATLCMAPSDCSGGHFSSLSKGIGAGQDGEAHPSTGSESDSSPQQGADHSCEGCDASCCSPSCYSTSCYSSSCYSSSCYSSSCYNGNNRFASHTRFSSVDSAKISESTVFSSQEDEEEENSAFESVPDSVQSPELDPESTNGAGPWQDELAAPGGNAARSTEGLESPMAGPSNRREGECPILHNSQPISQLPSLRPEHHHYPTIDEPLPPNWEARIDSHGRVFYVDHINRTTTWQRPSMAPTPDGMIRSGSVHQMEQLNRRYQNIQRTMATERAEEDSGNQNSEQIPDGGGGGGGGSDSEAESSQSSLDLRREGSLSPVNSQKVTLLLQSPAVKFITNPEFFTVLHANYSAYRVFTSSTCLKHMILKVRRDARNFERYQHNRDLVNFINMFADTRLELPRGWEIKTDHQGKSFFVDHNSRATTFIDPRIPLQNGRLPNHLTHRQHLQRLRSYSAGEASEVSRNRGASLLARPGHSLIAAIRSQHQHESLPLAYNDKIVAFLRQPNIFEMLQERQPSLARNHTLREKIHYIRTEGNHGLDKLSCDADLVILLSLFEEEIMSYVPLQSAFHPGYSFSPRCSPCSSPQNSPGLQRASARAPSPYRRDFEAKLRNFYRKLEAKGFGQGPGKIKLIIRRDHLLEGTFNQVMAYSRKELQRNKLYITFVGEEGLDYSGPSREFFFLLSQELFNPYYGLFEYSANDTYTVQISPMSAFVENYLEWFRFSGRILGLALIHQYLLDAFFTRPFYKGLLKLPCDLSDLEYLDEEFHQSLQWMKDNNITDILDLTFTVNEEVFGQVTERELKSGGANTQVTEKNKKEYIERMVKWRVERGVVQQTEALLRGFYEVVDSRLVSVFDARELELVIAGTAEIDLNDWRNNTEYRGGYHDGHLVIRWFWAAVERFNNEQRLRLLQFVTGTSSVPYEGFAALRGSNGLRRFCIEKWGKITSLPRAHTCFNRLDLPPYPSYSMLYEKLLTAVEETSTFGLE.

The C2 domain occupies Ser-182 to Val-318. Disordered regions lie at residues Asp-350–Pro-539, Pro-572–Val-604, Gly-642–Ala-667, and Ser-727–Glu-826. Residues Ser-362–Glu-380 show a composition bias toward polar residues. Over residues Glu-387 to Ser-396 the composition is skewed to basic and acidic residues. Positions Ser-398 to Glu-412 are enriched in polar residues. Composition is skewed to acidic residues over residues Ala-435–Asp-444 and Glu-458–Ser-469. Residues Gly-494–Asp-505 are compositionally biased toward basic and acidic residues. The segment covering Thr-580–Glu-589 has biased composition (acidic residues). Positions Ser-590–Leu-601 are enriched in basic and acidic residues. Composition is skewed to polar residues over residues Ser-654 to Ala-667, Asp-748 to Gly-762, and His-803 to Pro-812. The region spanning Glu-826–Met-859 is the WW 1 domain. Ser-871 is modified (phosphoserine). A coiled-coil region spans residues Ser-871–Ser-898. A disordered region spans residues Ala-890–Leu-936. The span at Asp-908 to Ser-917 shows a compositional bias: gly residues. Ser-935 and Ser-937 each carry phosphoserine. The 34-residue stretch at Leu-1016–Ile-1049 folds into the WW 2 domain. Residues Ser-1269–Glu-1604 form the HECT domain. The active-site Glycyl thioester intermediate is Cys-1572.

As to quaternary structure, interacts with DVL1 and SSR3. Predominantly expressed in neurons of the spinal cord.

The protein resides in the cytoplasm. The enzyme catalyses S-ubiquitinyl-[E2 ubiquitin-conjugating enzyme]-L-cysteine + [acceptor protein]-L-lysine = [E2 ubiquitin-conjugating enzyme]-L-cysteine + N(6)-ubiquitinyl-[acceptor protein]-L-lysine.. It participates in protein modification; protein ubiquitination. In terms of biological role, E3 ubiquitin-protein ligase that mediates ubiquitination and subsequent degradation of DVL1. This is E3 ubiquitin-protein ligase HECW1 (Hecw1) from Mus musculus (Mouse).